A 618-amino-acid chain; its full sequence is DNA mismatch repair protein MutL (618 aa).

The protein belongs to the DNA mismatch repair MutL/HexB family.

Its function is as follows. This protein is involved in the repair of mismatches in DNA. It is required for dam-dependent methyl-directed DNA mismatch repair. May act as a 'molecular matchmaker', a protein that promotes the formation of a stable complex between two or more DNA-binding proteins in an ATP-dependent manner without itself being part of a final effector complex. The chain is DNA mismatch repair protein MutL from Porphyromonas gingivalis (strain ATCC 33277 / DSM 20709 / CIP 103683 / JCM 12257 / NCTC 11834 / 2561).